The chain runs to 216 residues: Redox-sensing transcriptional repressor Rex (216 aa).

Residues 15-54 constitute a DNA-binding region (H-T-H motif); it reads KYLRVTQQLIEEGRDAVSSKELGDFTGINPVQVRRDLNAI. Residue 89 to 94 participates in NAD(+) binding; that stretch reads GAGNLG.

It belongs to the transcriptional regulatory Rex family. Homodimer.

Its subcellular location is the cytoplasm. Functionally, modulates transcription in response to changes in cellular NADH/NAD(+) redox state. The sequence is that of Redox-sensing transcriptional repressor Rex from Rubrobacter xylanophilus (strain DSM 9941 / JCM 11954 / NBRC 16129 / PRD-1).